The primary structure comprises 129 residues: Dynein 14 kDa light chain, flagellar outer arm (129 aa).

A Thioredoxin domain is found at 2-109; that stretch reads AFITEIANEA…LNRIVTELSG (108 aa). An intrachain disulfide couples Cys34 to Cys37. Residues 107–129 form a disordered region; that stretch reads LSGKNPPPAAPAAAPAAPAAEAS. Over residues 117–129 the composition is skewed to low complexity; the sequence is PAAAPAAPAAEAS.

As to quaternary structure, consists of at least 3 heavy chains (alpha, beta and gamma), 2 intermediate chains and 8 light chains.

The protein localises to the cell projection. It localises to the cilium. It is found in the flagellum. The protein resides in the cytoplasm. Its subcellular location is the cytoskeleton. The protein localises to the flagellum axoneme. In terms of biological role, may be involved in regulating the redox state of functionally important thiol groups within dynein. In Chlamydomonas reinhardtii (Chlamydomonas smithii), this protein is Dynein 14 kDa light chain, flagellar outer arm.